We begin with the raw amino-acid sequence, 311 residues long: Serpentine receptor class gamma-6 (311 aa).

A run of 7 helical transmembrane segments spans residues 24–44 (MGQL…IYVI), 58–78 (FWLL…FDIF), 101–121 (PLLI…KMVA), 148–168 (LTAC…NILI), 200–220 (YMQI…AILW), 235–255 (IWFA…YLHM), and 266–286 (IFML…VIMI).

The protein belongs to the nematode receptor-like protein srg family.

The protein localises to the membrane. This chain is Serpentine receptor class gamma-6 (srg-6), found in Caenorhabditis elegans.